The following is a 256-amino-acid chain: Probable septum site-determining protein MinC (256 aa).

Residues 105 to 143 (RRGATAKPEPADEAEPPVAAAAAEAVPEPAPELAPSAPT) are disordered. Residues 120-142 (PPVAAAAAEAVPEPAPELAPSAP) are compositionally biased toward low complexity.

Belongs to the MinC family. Interacts with MinD and FtsZ.

Its function is as follows. Cell division inhibitor that blocks the formation of polar Z ring septums. Rapidly oscillates between the poles of the cell to destabilize FtsZ filaments that have formed before they mature into polar Z rings. Prevents FtsZ polymerization. This Burkholderia vietnamiensis (strain G4 / LMG 22486) (Burkholderia cepacia (strain R1808)) protein is Probable septum site-determining protein MinC.